A 394-amino-acid chain; its full sequence is Elongation factor Tu, mitochondrial (394 aa).

In terms of domain architecture, tr-type G spans 10–204; that stretch reads KPHCNIGTIG…AVDNYIPQPE (195 aa). The interval 19–26 is G1; it reads GHVDHGKT. Residue 19–26 participates in GTP binding; sequence GHVDHGKT. Residues 60-64 form a G2 region; it reads GITIS. The tract at residues 81-84 is G3; it reads DCPG. GTP contacts are provided by residues 81–85 and 136–139; these read DCPGH and NKVD. Positions 136–139 are G4; sequence NKVD. The G5 stretch occupies residues 174–176; the sequence is SAL.

Belongs to the TRAFAC class translation factor GTPase superfamily. Classic translation factor GTPase family. EF-Tu/EF-1A subfamily.

It localises to the mitochondrion. This protein promotes the GTP-dependent binding of aminoacyl-tRNA to the A-site of ribosomes during protein biosynthesis. In Reclinomonas americana, this protein is Elongation factor Tu, mitochondrial (TUFA).